A 139-amino-acid chain; its full sequence is 6,7-dimethyl-8-ribityllumazine synthase (139 aa).

Residues Phe-11, 42 to 44 (ALE), and 66 to 68 (VVI) each bind 5-amino-6-(D-ribitylamino)uracil. Position 71–72 (71–72 (ET)) interacts with (2S)-2-hydroxy-3-oxobutyl phosphate. His-74 serves as the catalytic Proton donor. Asn-98 provides a ligand contact to 5-amino-6-(D-ribitylamino)uracil. Position 112 (Arg-112) interacts with (2S)-2-hydroxy-3-oxobutyl phosphate.

This sequence belongs to the DMRL synthase family.

It catalyses the reaction (2S)-2-hydroxy-3-oxobutyl phosphate + 5-amino-6-(D-ribitylamino)uracil = 6,7-dimethyl-8-(1-D-ribityl)lumazine + phosphate + 2 H2O + H(+). The protein operates within cofactor biosynthesis; riboflavin biosynthesis; riboflavin from 2-hydroxy-3-oxobutyl phosphate and 5-amino-6-(D-ribitylamino)uracil: step 1/2. In terms of biological role, catalyzes the formation of 6,7-dimethyl-8-ribityllumazine by condensation of 5-amino-6-(D-ribitylamino)uracil with 3,4-dihydroxy-2-butanone 4-phosphate. This is the penultimate step in the biosynthesis of riboflavin. The sequence is that of 6,7-dimethyl-8-ribityllumazine synthase from Novosphingobium aromaticivorans (strain ATCC 700278 / DSM 12444 / CCUG 56034 / CIP 105152 / NBRC 16084 / F199).